A 103-amino-acid polypeptide reads, in one-letter code: Pyrimidine/purine nucleoside phosphorylase (103 aa).

Belongs to the nucleoside phosphorylase PpnP family.

The catalysed reaction is a purine D-ribonucleoside + phosphate = a purine nucleobase + alpha-D-ribose 1-phosphate. It catalyses the reaction adenosine + phosphate = alpha-D-ribose 1-phosphate + adenine. It carries out the reaction cytidine + phosphate = cytosine + alpha-D-ribose 1-phosphate. The enzyme catalyses guanosine + phosphate = alpha-D-ribose 1-phosphate + guanine. The catalysed reaction is inosine + phosphate = alpha-D-ribose 1-phosphate + hypoxanthine. It catalyses the reaction thymidine + phosphate = 2-deoxy-alpha-D-ribose 1-phosphate + thymine. It carries out the reaction uridine + phosphate = alpha-D-ribose 1-phosphate + uracil. The enzyme catalyses xanthosine + phosphate = alpha-D-ribose 1-phosphate + xanthine. In terms of biological role, catalyzes the phosphorolysis of diverse nucleosides, yielding D-ribose 1-phosphate and the respective free bases. Can use uridine, adenosine, guanosine, cytidine, thymidine, inosine and xanthosine as substrates. Also catalyzes the reverse reactions. This is Pyrimidine/purine nucleoside phosphorylase from Cupriavidus metallidurans (strain ATCC 43123 / DSM 2839 / NBRC 102507 / CH34) (Ralstonia metallidurans).